Reading from the N-terminus, the 480-residue chain is tRNA-2-methylthio-N(6)-dimethylallyladenosine synthase (480 aa).

One can recognise an MTTase N-terminal domain in the interval 25–145 (GVFYVHTLGC…LPQLLDQARI (121 aa)). [4Fe-4S] cluster contacts are provided by C34, C74, C108, C182, C186, and C189. The Radical SAM core domain maps to 168–397 (RASKVSSWVA…VALQERITEE (230 aa)). One can recognise a TRAM domain in the interval 400–470 (KTFEGRDVEV…RHNLIADPNP (71 aa)).

The protein belongs to the methylthiotransferase family. MiaB subfamily. As to quaternary structure, monomer. [4Fe-4S] cluster is required as a cofactor.

It is found in the cytoplasm. It catalyses the reaction N(6)-dimethylallyladenosine(37) in tRNA + (sulfur carrier)-SH + AH2 + 2 S-adenosyl-L-methionine = 2-methylsulfanyl-N(6)-dimethylallyladenosine(37) in tRNA + (sulfur carrier)-H + 5'-deoxyadenosine + L-methionine + A + S-adenosyl-L-homocysteine + 2 H(+). Its function is as follows. Catalyzes the methylthiolation of N6-(dimethylallyl)adenosine (i(6)A), leading to the formation of 2-methylthio-N6-(dimethylallyl)adenosine (ms(2)i(6)A) at position 37 in tRNAs that read codons beginning with uridine. This Bifidobacterium adolescentis (strain ATCC 15703 / DSM 20083 / NCTC 11814 / E194a) protein is tRNA-2-methylthio-N(6)-dimethylallyladenosine synthase.